The sequence spans 259 residues: Putative zinc metalloprotease Rip2 (259 aa).

Helical transmembrane passes span 14–34 (PIFLGLLGLTAVGGALAWLAG) and 39–59 (PLAYAGVFVMVIAGWLVSLCL). Histidine 60 is a binding site for Zn(2+). Residue glutamate 61 is part of the active site. Histidine 64 lines the Zn(2+) pocket. 4 consecutive transmembrane segments (helical) span residues 97-117 (GLPMLFIALGGIGLPGAAVYV), 128-148 (TLVSLAGPTVNLALAMLLLAA), 156-176 (IHAVLWAGVAFLAFLQLTALV), and 211-231 (LVFLLVLFLAPTLNGWFFGVV).

The protein belongs to the peptidase M50B family. It depends on Zn(2+) as a cofactor.

The protein resides in the cell membrane. The polypeptide is Putative zinc metalloprotease Rip2 (rip2) (Mycobacterium tuberculosis (strain ATCC 25618 / H37Rv)).